The following is a 373-amino-acid chain: XK-related protein 9 (373 aa).

A run of 8 helical transmembrane segments spans residues 8–28 (FMMSVLGIIIYVTDLIVDIWV), 38–58 (YVFSALALSFMLFGTLVAQCF), 166–186 (AAIMVSCCAISWSTVDYQVAL), 203–223 (ITYLFYKLFTLLSWMLSVVLL), 224–244 (LFLNVKIALFLLLFLWLLGII), 256–276 (CISMEFLYRIVVGFILIFTFF), 295–315 (VLGTLGILTVFWVCPLTIFNP), and 318–338 (FIPISITIVLTLLLGILFLIV).

It belongs to the XK family. Undergoes proteolytic processing by caspase-3 (CASP3), caspase-6 (CASP6) and caspase-7 (CASP7) to generate the XK-related protein 9, processed form, leading to its activation.

It is found in the cell membrane. It carries out the reaction a 1,2-diacyl-sn-glycero-3-phospho-L-serine(in) = a 1,2-diacyl-sn-glycero-3-phospho-L-serine(out). Its activity is regulated as follows. Activated upon caspase cleavage to generate the XK-related protein 9, processed form. Does not act prior the onset of apoptosis. In terms of biological role, phospholipid scramblase that promotes phosphatidylserine exposure on apoptotic cell surface. Phosphatidylserine is a specific marker only present at the surface of apoptotic cells and acts as a specific signal for engulfment. The polypeptide is XK-related protein 9 (Homo sapiens (Human)).